The following is a 168-amino-acid chain: Nicotinamide-nucleotide adenylyltransferase (168 aa).

The protein belongs to the archaeal NMN adenylyltransferase family.

Its subcellular location is the cytoplasm. It catalyses the reaction beta-nicotinamide D-ribonucleotide + ATP + H(+) = diphosphate + NAD(+). It functions in the pathway cofactor biosynthesis; NAD(+) biosynthesis; NAD(+) from nicotinamide D-ribonucleotide: step 1/1. In Methanoculleus marisnigri (strain ATCC 35101 / DSM 1498 / JR1), this protein is Nicotinamide-nucleotide adenylyltransferase.